A 396-amino-acid chain; its full sequence is Stearoyl-[acyl-carrier-protein] 9-desaturase, chloroplastic (396 aa).

Residues 1-33 constitute a chloroplast transit peptide; sequence MALKLNPFLSQTQKLPSFALPPMASTRSPKFYM. Glu138, Glu176, His179, Glu229, Glu262, and His265 together coordinate Fe cation.

This sequence belongs to the fatty acid desaturase type 2 family. As to quaternary structure, homodimer. The cofactor is Fe(2+). In terms of tissue distribution, higher levels in developing seeds than in leaf and root tissues.

The protein resides in the plastid. It is found in the chloroplast. The catalysed reaction is octadecanoyl-[ACP] + 2 reduced [2Fe-2S]-[ferredoxin] + O2 + 2 H(+) = (9Z)-octadecenoyl-[ACP] + 2 oxidized [2Fe-2S]-[ferredoxin] + 2 H2O. It functions in the pathway lipid metabolism; fatty acid metabolism. Its function is as follows. Converts stearoyl-ACP to oleoyl-ACP by introduction of a cis double bond between carbons 9 and 10 of the acyl chain. This Ricinus communis (Castor bean) protein is Stearoyl-[acyl-carrier-protein] 9-desaturase, chloroplastic.